Reading from the N-terminus, the 1038-residue chain is MQPEEGTGWLLELLSEVQLQQYFLRLRDDLNVTRLSHFEYVKNEDLEKIGMGRPGQRRLWEAVKRRKALCKRKSWMSKVFSGKRLEAEFPPHHSQSTFRKTSPAPGGPAGEGPLQSLTCLIGEKDLRLLEKLGDGSFGVVRRGEWDAPSGKTVSVAVKCLKPDVLSQPEAMDDFIREVNAMHSLDHRNLIRLYGVVLTPPMKMVTELAPLGSLLDRLRKHQGHFLLGTLSRYAVQVAEGMGYLESKRFIHRDLAARNLLLATRDLVKIGDFGLMRALPQNDDHYVMQEHRKVPFAWCAPESLKTRTFSHASDTWMFGVTLWEMFTYGQEPWIGLNGSQILHKIDKEGERLPRPEDCPQDIYNVMVQCWAHKPEDRPTFVALRDFLLEAQPTDMRALQDFEEPDKLHIQMNDVITVIEGRAENYWWRGQNTRTLCVGPFPRNVVTSVAGLSAQDISQPLQNSFIHTGHGDSDPRHCWGFPDRIDELYLGNPMDPPDLLSVELSTSRPPQHLGGVKKPTYDPVSEDQDPLSSDFKRLGLRKPGLPRGLWLAKPSARVPGTKASRGSGAEVTLIDFGEEPVVPALRPCAPSLAQLAMDACSLLDETPPQSPTRALPRPLHPTPVVDWDARPLPPPPAYDDVAQDEDDFEICSINSTLVGAGVPAGPSQGQTNYAFVPEQARPPPPLEDNLFLPPQGGGKPPSSAQTAEIFQALQQECMRQLQAPAGSPAPSPSPGGDDKPQVPPRVPIPPRPTRPHVQLSPAPPGEEETSQWPGPASPPRVPPREPLSPQGSRTPSPLVPPGSSPLPPRLSSSPGKTMPTTQSFASDPKYATPQVIQAPGPRAGPCILPIVRDGKKVSSTHYYLLPERPSYLERYQRFLREAQSPEEPTPLPVPLLLPPPSTPAPAAPTATVRPMPQAALDPKANFSTNNSNPGARPPPPRATARLPQRGCPGDGPEAGRPADKIQMAMVHGVTTEECQAALQCHGWSVQRAAQYLKVEQLFGLGLRPRGECHKVLEMFDWNLEQAGCHLLGSWGPAHHKR.

The SAM-like domain stretch occupies residues 1-110; it reads MQPEEGTGWL…TSPAPGGPAG (110 aa). Residues 90 to 114 are disordered; the sequence is PPHHSQSTFRKTSPAPGGPAGEGPL. Residues 126–385 form the Protein kinase domain; sequence LRLLEKLGDG…PTFVALRDFL (260 aa). ATP is bound by residues 132-140 and Lys158; that span reads LGDGSFGVV. Asp252 acts as the Proton acceptor in catalysis. A Phosphotyrosine; by SRC and autocatalysis modification is found at Tyr284. An SH3 domain is found at 388 to 448; sequence AQPTDMRALQ…PRNVVTSVAG (61 aa). Positions 454 to 466 constitute a CRIB domain; sequence ISQPLQNSFIHTG. Positions 497-535 are disordered; it reads LSVELSTSRPPQHLGGVKKPTYDPVSEDQDPLSSDFKRL. A Phosphotyrosine modification is found at Tyr518. The tract at residues 623–652 is required for interaction with SRC; it reads DWDARPLPPPPAYDDVAQDEDDFEICSINS. The interval 632–635 is required for interaction with NEDD4; that stretch reads PPAY. Disordered stretches follow at residues 659 to 702 and 718 to 840; these read VPAG…SSAQ and LQAP…GPRA. Ser724 bears the Phosphoserine mark. An EBD domain region spans residues 733 to 876; it reads GDDKPQVPPR…SYLERYQRFL (144 aa). 3 stretches are compositionally biased toward pro residues: residues 738-749, 772-783, and 794-805; these read QVPPRVPIPPRP, PASPPRVPPREP, and PLVPPGSSPLPP. At Tyr827 the chain carries Phosphotyrosine. Residue Arg839 is modified to Omega-N-methylarginine. Phosphotyrosine occurs at positions 859 and 872. Residue Ser881 is modified to Phosphoserine. Residues 917-957 form a disordered region; the sequence is LDPKANFSTNNSNPGARPPPPRATARLPQRGCPGDGPEAGR. In terms of domain architecture, UBA spans 958–996; that stretch reads PADKIQMAMVHGVTTEECQAALQCHGWSVQRAAQYLKVE.

It belongs to the protein kinase superfamily. Tyr protein kinase family. In terms of assembly, interacts with NEDD4 (via WW3 domain). NEDD4L and EGF promote association with NEDD4. Homodimer. Interacts with AR, CDC42, WWASL and WWOX. Interacts with CSPG4 (activated). Interacts with MERTK (activated); stimulates autophosphorylation. May interact (phosphorylated) with HSP90AB1; maintains kinase activity. Interacts with NPHP1. Interacts with SNX9 (via SH3 domain). Interacts with SRC (via SH2 and SH3 domain). Interacts with EGFR, and this interaction is dependent on EGF stimulation and kinase activity of EGFR. Interacts (via kinase domain) with AKT1. Part of a collagen stimulated complex involved in cell migration composed of CDC42, CRK, TNK2 and BCAR1/p130cas. Interacts with BCAR1/p130cas via SH3 domains. Forms complexes with GRB2 and numerous receptor tyrosine kinases (RTK) including LTK, AXL or PDGFRL, in which GRB2 promotes RTK recruitment by TNK2. Requires Mg(2+) as cofactor. Post-translationally, autophosphorylation regulates kinase activity. Phosphorylation on Tyr-518 is required for interaction with SRC and is observed during association with clathrin-coated pits. In terms of processing, polyubiquitinated by NEDD4 and NEDD4L. Degradation can be induced by EGF and is lysosome-dependent. In terms of tissue distribution, the Tyr-284 phosphorylated form shows a significant increase in expression in breast cancers during the progressive stages i.e. normal to hyperplasia (ADH), ductal carcinoma in situ (DCIS), invasive ductal carcinoma (IDC) and lymph node metastatic (LNMM) stages. It also shows a significant increase in expression in prostate cancers during the progressive stages.

Its subcellular location is the cell membrane. The protein resides in the nucleus. It is found in the endosome. The protein localises to the cell junction. It localises to the adherens junction. Its subcellular location is the cytoplasmic vesicle membrane. The protein resides in the cytoplasmic vesicle. It is found in the clathrin-coated vesicle. The protein localises to the membrane. It localises to the clathrin-coated pit. Its subcellular location is the cytoplasm. The protein resides in the perinuclear region. It is found in the cytosol. It catalyses the reaction L-tyrosyl-[protein] + ATP = O-phospho-L-tyrosyl-[protein] + ADP + H(+). It carries out the reaction L-seryl-[protein] + ATP = O-phospho-L-seryl-[protein] + ADP + H(+). The enzyme catalyses L-threonyl-[protein] + ATP = O-phospho-L-threonyl-[protein] + ADP + H(+). With respect to regulation, inhibited by AIM-100 (4-amino-5,6-biaryl-furo[2,3-d]pyrimidine), which suppresses activating phosphorylation at Tyr-284. Repressed by dasatinib. Non-receptor tyrosine-protein and serine/threonine-protein kinase that is implicated in cell spreading and migration, cell survival, cell growth and proliferation. Transduces extracellular signals to cytosolic and nuclear effectors. Phosphorylates AKT1, AR, MCF2, WASL and WWOX. Implicated in trafficking and clathrin-mediated endocytosis through binding to epidermal growth factor receptor (EGFR) and clathrin. Binds to both poly- and mono-ubiquitin and regulates ligand-induced degradation of EGFR, thereby contributing to the accumulation of EGFR at the limiting membrane of early endosomes. Downstream effector of CDC42 which mediates CDC42-dependent cell migration via phosphorylation of BCAR1. May be involved both in adult synaptic function and plasticity and in brain development. Activates AKT1 by phosphorylating it on 'Tyr-176'. Phosphorylates AR on 'Tyr-267' and 'Tyr-363' thereby promoting its recruitment to androgen-responsive enhancers (AREs). Phosphorylates WWOX on 'Tyr-287'. Phosphorylates MCF2, thereby enhancing its activity as a guanine nucleotide exchange factor (GEF) toward Rho family proteins. Contributes to the control of AXL receptor levels. Confers metastatic properties on cancer cells and promotes tumor growth by negatively regulating tumor suppressor such as WWOX and positively regulating pro-survival factors such as AKT1 and AR. Phosphorylates WASP. The polypeptide is Activated CDC42 kinase 1 (TNK2) (Homo sapiens (Human)).